The primary structure comprises 379 residues: Sialidase-2 (379 aa).

The FRIP motif motif lies at 20-23 (YRIP). Arg21 and Arg41 together coordinate substrate. Asp46 (proton acceptor) is an active-site residue. The BNR 1 repeat unit spans residues 127 to 138 (ITSTDHGKTWSA). 2 residues coordinate substrate: Tyr179 and Tyr181. A BNR 2 repeat occupies 197–208 (FLSHDHGSTWEL). The substrate site is built by Glu218, Arg237, and Arg303. Tyr333 functions as the Nucleophile in the catalytic mechanism. Glu354 is a catalytic residue.

It belongs to the glycosyl hydrolase 33 family.

The protein resides in the cytoplasm. The catalysed reaction is Hydrolysis of alpha-(2-&gt;3)-, alpha-(2-&gt;6)-, alpha-(2-&gt;8)- glycosidic linkages of terminal sialic acid residues in oligosaccharides, glycoproteins, glycolipids, colominic acid and synthetic substrates.. Its function is as follows. Catalyzes the removal of sialic acid (N-acetylneuraminic acid) moieties from glycoproteins, oligosaccharides and gangliosides. In Cricetulus griseus (Chinese hamster), this protein is Sialidase-2 (NEU2).